Here is a 1653-residue protein sequence, read N- to C-terminus: Clathrin heavy chain (1653 aa).

The tract at residues 1-483 (MSDLPIEFTE…FDTTLALACY (483 aa)) is globular terminal domain. WD40-like repeat regions lie at residues 23–66 (FLDF…KNMG), 67–107 (GDSA…LDEP), 108–152 (VIFW…ANLN), 153–198 (NTQI…QAID), 199–263 (GHVA…PDAT), 264–307 (NDFP…ITAE), and 308–336 (SVFT…VEIS). The binding site for the uncoating ATPase, involved in lattice disassembly stretch occupies residues 453–469 (EKWLKEDKLECSEELGD). The interval 484-527 (LRAGAHAKVISCLAELQQFEKIIPYCQKVGYQPNFLVLISSLIR) is flexible linker. Residues 528-1653 (SSPDRASEFA…SAMNVQPTGF (1126 aa)) form a heavy chain arm region. 7 CHCR repeats span residues 543 to 689 (NPET…QTVV), 692 to 834 (ATKF…DEAF), 839 to 978 (LQSV…QLID), 985 to 1130 (IPEL…IPDA), 1134 to 1275 (YIKA…FKLA), 1280 to 1426 (LNLI…SLLV), and 1429 to 1572 (LTSL…REGF). K1107 is covalently cross-linked (Glycyl lysine isopeptide (Lys-Gly) (interchain with G-Cter in ubiquitin)). An involved in binding clathrin light chain region spans residues 1219–1528 (AARLCYSAVS…LLYRRNKKWA (310 aa)).

The protein belongs to the clathrin heavy chain family. As to quaternary structure, clathrin triskelions, composed of 3 heavy chains and 3 light chains, are the basic subunits of the clathrin coat. Interacts with the auxilin-like clathrin uncoating factor SWA2. Interacts with INP53.

The protein resides in the cytoplasmic vesicle membrane. It is found in the membrane. The protein localises to the coated pit. In terms of biological role, clathrin is the major protein of the polyhedral coat of coated pits and vesicles. In yeast, it is involved in the retention of proteins in an intracellular membrane compartment, presumably the trans-Golgi. This Saccharomyces cerevisiae (strain ATCC 204508 / S288c) (Baker's yeast) protein is Clathrin heavy chain (CHC1).